A 438-amino-acid chain; its full sequence is Flotillin-2 (438 aa).

The protein belongs to the band 7/mec-2 family. Flotillin subfamily. Heterooligomeric complex of flotillins 1 and 2.

Its subcellular location is the membrane. In terms of biological role, may play a role in axon growth and regeneration. May be involved in epidermal cell adhesion and epidermal structure and function. The chain is Flotillin-2 from Drosophila melanogaster (Fruit fly).